The sequence spans 73 residues: Translation initiation factor IF-1 3 (73 aa).

An S1-like domain is found at 1 to 72 (MAKEELVEFG…TKGRINYRHK (72 aa)).

The protein belongs to the IF-1 family. In terms of assembly, component of the 30S ribosomal translation pre-initiation complex which assembles on the 30S ribosome in the order IF-2 and IF-3, IF-1 and N-formylmethionyl-tRNA(fMet); mRNA recruitment can occur at any time during PIC assembly.

It localises to the cytoplasm. One of the essential components for the initiation of protein synthesis. Stabilizes the binding of IF-2 and IF-3 on the 30S subunit to which N-formylmethionyl-tRNA(fMet) subsequently binds. Helps modulate mRNA selection, yielding the 30S pre-initiation complex (PIC). Upon addition of the 50S ribosomal subunit IF-1, IF-2 and IF-3 are released leaving the mature 70S translation initiation complex. The sequence is that of Translation initiation factor IF-1 3 from Cupriavidus pinatubonensis (strain JMP 134 / LMG 1197) (Cupriavidus necator (strain JMP 134)).